A 3230-amino-acid polypeptide reads, in one-letter code: MQSSPSPAHPQLPVLQTQMVSDGMTGSNPVSPASSSSPASSGAGGISPQHIAQDSSLDGPPGPPDGATVPLEGFSLSQAADLANKGPKWEKSHAEIAEQAKHEAEIETRIAELRKEGFWSLKRLPKVPEPPRPKGHWDYLCEEMQWLSADFAQERRWKRGVARKVVRMVIRHHEEQRQKEERARREEQAKLRRIASTMAKDVRQFWSNVEKVVQFKQQSRLEEKRKKALDLHLDFIVGQTEKYSDLLSQSLNQPLTSSKAGSSPCLGSSSAASSPPPPASRLDDEDGDFQPQEDEEEDDEETIEVEEQQEGNDAEAQRREIELLRREGELPLEELLRSLPPQLLEGPSSPSQTPSSHDSDTRDGPEEGAEEEPPQVLEIKPPPSAVTQRNKQPWHPDEDDEEFTANEEEAEDEEDTIAAEEQLEGEVDHAMELSELAREGELSMEELLQQYAGAYAPGSGSSEDEDEDEVDANSSDCEPEGPVEAEEPPQEDSSSQSDSVEDRSEDEEDEHSEEEETSGSSASEESESEESEDAQSQSQADEEEEDDDFGVEYLLARDEEQSEADAGSGPPTPGPTTLGPKKEITDIAAAAESLQPKGYTLATTQVKTPIPLLLRGQLREYQHIGLDWLVTMYEKKLNGILADEMGLGKTIQTISLLAHLACEKGNWGPHLIIVPTSVMLNWEMELKRWCPSFKILTYYGAQKERKLKRQGWTKPNAFHVCITSYKLVLQDHQAFRRKNWRYLILDEAQNIKNFKSQRWQSLLNFNSQRRLLLTGTPLQNSLMELWSLMHFLMPHVFQSHREFKEWFSNPLTGMIEGSQEYNEGLVKRLHKVLRPFLLRRVKVDVEKQMPKKYEHVIRCRLSKRQRCLYDDFMAQTTTKETLATGHFMSVINILMQLRKVCNHPNLFDPRPVTSPFITPGICFSTASLVLRATDVHPLQRIDMGRFDLIGLEGRVSRYEADTFLPRHRLSRRVLLEVATAPDPPPRPKPVKMKVNRMLQPVPKQEGRTVVVVNNPRAPLGPVPVRPPPGPELSAQPTPGPVPQVLPASLMVSASPAGPPLIPASRPPGPVLLPPLQPNSGSLPQVLPSPLGVLSGTSRPPTPTLSLKPTPPAPVRLSPAPPPGSSSLLKPLTVPPGYTFPPAAATTTSTTTATATTTAVPAPTPAPQRLILSPDMQARLPSGEVVSIGQLASLAQRPVANAGGSKPLTFQIQGNKLTLTGAQVRQLAVGQPRPLQRNVVHLVSAGGQHHLISQPAHVALIQAVAPTPGPTPVSVLPSSTPSTTPAPTGLSLPLAANQVPPTMVNNTGVVKIVVRQAPRDGLTPVPPLAPAPRPPSSGLPAVLNPRPTLTPGRLPTPTLGTARAPMPTPTLVRPLLKLVHSPSPEVSASAPGAAPLTISSPLHVPSSLPGPASSPMPIPNSSPLASPVSSTVSVPLSSSLPISVPTTLPAPASAPLTIPISAPLTVSASGPALLTSVTPPLAPVVPAAPGPPSLAPSGASPSASALTLGLATAPSLSSSQTPGHPLLLAPTSSHVPGLNSTVAPACSPVLVPASALASPFPSAPNPAPAQASLLAPASSASQALATPLAPMAAPQTAILAPSPAPPLAPLPVLAPSPGAAPVLASSQTPVPVMAPSSTPGTSLASASPVPAPTPVLAPSSTQTMLPAPVPSPLPSPASTQTLALAPALAPTLGGSSPSQTLSLGTGNPQGPFPTQTLSLTPASSLVPTPAQTLSLAPGPPLGPTQTLSLAPAPPLAPASPVGPAPAHTLTLAPASSSASLLAPASVQTLTLSPAPVPTLGPAAAQTLALAPASTQSPASQASSLVVSASGAAPLPVTMVSRLPVSKDEPDTLTLRSGPPSPPSTATSFGGPRPRRQPPPPPRSPFYLDSLEEKRKRQRSERLERIFQLSEAHGALAPVYGTEVLDFCTLPQPVASPIGPRSPGPSHPTFWTYTEAAHRAVLFPQQRLDQLSEIIERFIFVMPPVEAPPPSLHACHPPPWLAPRQAAFQEQLASELWPRARPLHRIVCNMRTQFPDLRLIQYDCGKLQTLAVLLRQLKAEGHRVLIFTQMTRMLDVLEQFLTYHGHLYLRLDGSTRVEQRQALMERFNADKRIFCFILSTRSGGVGVNLTGADTVVFYDSDWNPTMDAQAQDRCHRIGQTRDVHIYRLISERTVEENILKKANQKRMLGDMAIEGGNFTTAYFKQQTIRELFDMPLEEPSSSSVPSAPEEEEETVASKQTHILEQALCRAEDEEDIRAATQAKAEQVAELAEFNENDGFPAGEGEEAGRPGAEDEEMSRAEQEIAALVEQLTPIERYAMKFLEASLEEVSREELKQAEEQVEAARKDLDQAKEEVFRLPQEEEEGPGAGDESSCGTGGGTHRRSKKAKAPERPGTRVSERLRGARAETQGANHTPVISAHQTRSTTTPPRCSPARERVPRPAPRPRPTPASAPAAIPALVPVPVSAPVPISAPNPITILPVHILPSPPPPSQIPPCSSPACTPPPACTPPPAHTPPPAQTCLVTPSSPLLLGPPSVPISASVTNLPLGLRPEAELCAQALASPESLELASVASSETSSLSLVPPKDLLPVAVEILPVSEKNLSLTPSAPSLTLEAGSIPNGQEQEAPDSAEGTTLTVLPEGEELPLCVSESNGLELPPSAASDEPLQEPLEADRTSEELTEAKTPTSSPEKPQELVTAEVAAPSTSSSATSSPEGPSPARPPRRRTSADVEIRGQGTGRPGQPPGPKVLRKLPGRLVTVVEEKELVRRRRQQRGAASTLVPGVSETSASPGSPSVRSMSGPESSPPIGGPCEAAPSSSLPTPPQQPFIARRHIELGVTGGGSPENGDGALLAITPPAVKRRRGRPPKKNRSPADAGRGVDEAPSSTLKGKTNGADPVPGPETLIVADPVLEPQLIPGPQPLGPQPVHRPNPLLSPVEKRRRGRPPKARDLPIPGTISSAGDGNSESRTQPPPHPSPLTPLPPLLVCPTATVANTVTTVTISTSPPKRKRGRPPKNPPSPRPSQLPVLDRDSTSVLESCGLGRRRQPQGQGESEGSSSDEDGSRPLTRLARLRLEAEGMRGRKSGGSMVVAVIQDDLDLADSGPGGLELTPPVVSLTPKLRSTRLRPGSLVPPLETEKLPRKRAGAPVGGSPGLAKRGRLQPPSPLGPEGSVEESEAEASGEEEEGDGTPRRRPGPRRLVGTTNQGDQRILRSSAPPSLAGPAVSHRGRKAKT.

Positions 1–71 (MQSSPSPAHP…GPPDGATVPL (71 aa)) are disordered. The span at 26-41 (GSNPVSPASSSSPASS) shows a compositional bias: low complexity. An HSA domain is found at 124–196 (LPKVPEPPRP…EQAKLRRIAS (73 aa)). 2 disordered regions span residues 253-547 (QPLT…EEDD) and 559-581 (EEQS…LGPK). The span at 257–273 (SSKAGSSPCLGSSSAAS) shows a compositional bias: low complexity. Residues 283-313 (DDEDGDFQPQEDEEEDDEETIEVEEQQEGND) are compositionally biased toward acidic residues. The span at 315-329 (EAQRREIELLRREGE) shows a compositional bias: basic and acidic residues. Low complexity predominate over residues 337-356 (RSLPPQLLEGPSSPSQTPSS). Acidic residues predominate over residues 397–425 (DEDDEEFTANEEEAEDEEDTIAAEEQLEG). Positions 426–441 (EVDHAMELSELAREGE) are enriched in basic and acidic residues. Acidic residues-rich tracts occupy residues 462 to 490 (SEDE…EPPQ), 503 to 517 (RSED…EEET), and 524 to 533 (EESESEESED). The Helicase ATP-binding domain maps to 630–795 (VTMYEKKLNG…WSLMHFLMPH (166 aa)). Residue 643–650 (DEMGLGKT) coordinates ATP. 3 disordered regions span residues 1017–1045 (APLG…PQVL), 1058–1125 (PPLI…PGSS), and 1138–1166 (TFPP…TPAP). 2 stretches are compositionally biased toward pro residues: residues 1018–1030 (PLGP…PPGP) and 1058–1076 (PPLI…PPLQ). The segment covering 1093-1107 (LSGTSRPPTPTLSLK) has biased composition (low complexity). Pro residues predominate over residues 1108–1123 (PTPPAPVRLSPAPPPG). Over residues 1138–1160 (TFPPAAATTTSTTTATATTTAVP) the composition is skewed to low complexity. At Ser-1172 the chain carries Phosphoserine. Disordered regions lie at residues 1320–1366 (GLTP…APMP), 1406–1425 (SLPG…PLAS), 1629–1760 (VPVM…ASPV), and 1839–1893 (SRLP…EEKR). The span at 1323–1336 (PVPPLAPAPRPPSS) shows a compositional bias: pro residues. Residues 1337–1360 (GLPAVLNPRPTLTPGRLPTPTLGT) are compositionally biased toward low complexity. Over residues 1675–1691 (PASTQTLALAPALAPTL) the composition is skewed to low complexity. The span at 1692-1733 (GGSSPSQTLSLGTGNPQGPFPTQTLSLTPASSLVPTPAQTLS) shows a compositional bias: polar residues. Over residues 1750–1760 (PAPPLAPASPV) the composition is skewed to pro residues. One can recognise a Helicase C-terminal domain in the interval 2044–2197 (KLQTLAVLLR…DMAIEGGNFT (154 aa)). 6 disordered regions span residues 2214–2233 (LEEP…EETV), 2271–2298 (FNEN…MSRA), 2327–2453 (VSRE…APAA), 2564–2583 (LELA…VPPK), 2598–3081 (KNLS…GRKS), and 3095–3230 (DLAD…KAKT). A compositionally biased stretch (low complexity) spans 2215–2225 (EEPSSSSVPSA). 3 stretches are compositionally biased toward basic and acidic residues: residues 2284-2298 (EAGR…MSRA), 2327-2358 (VSRE…RLPQ), and 2386-2403 (KAPE…RGAR). The span at 2438–2448 (RPAPRPRPTPA) shows a compositional bias: pro residues. 2 stretches are compositionally biased toward low complexity: residues 2564–2579 (LELA…SLSL) and 2600–2611 (LSLTPSAPSLTL). The segment covering 2669–2679 (EADRTSEELTE) has biased composition (basic and acidic residues). A compositionally biased stretch (low complexity) spans 2694 to 2712 (VTAEVAAPSTSSSATSSPE). Residues 2782 to 2794 (SETSASPGSPSVR) show a composition bias toward polar residues. Low complexity predominate over residues 2807-2817 (GPCEAAPSSSL). Basic residues predominate over residues 2856–2868 (VKRRRGRPPKKNR). The a.T hook 1 DNA-binding region spans 2857–2869 (KRRRGRPPKKNRS). Residues 2913 to 2926 (IPGPQPLGPQPVHR) are compositionally biased toward pro residues. Positions 2936–2948 (KRRRGRPPKARDL) form a DNA-binding region, a.T hook 2. Polar residues predominate over residues 2953 to 2965 (TISSAGDGNSESR). A compositionally biased stretch (pro residues) spans 2967–2982 (QPPPHPSPLTPLPPLL). A compositionally biased stretch (low complexity) spans 2983–3002 (VCPTATVANTVTTVTISTSP). Residues 3004-3016 (KRKRGRPPKNPPS) constitute a DNA-binding region (a.T hook 3). The span at 3011-3020 (PKNPPSPRPS) shows a compositional bias: pro residues. Over residues 3044–3053 (PQGQGESEGS) the composition is skewed to low complexity. The segment covering 3168-3184 (SVEESEAEASGEEEEGD) has biased composition (acidic residues).

It belongs to the SNF2/RAD54 helicase family. SWR1 subfamily. Interacts with CREBBP and EP300. May be part of a complex containing SRCAP, CREBBP, CARM1 and GRIP1. Component of the chromatin-remodeling SRCAP complex composed of at least SRCAP, DMAP1, RUVBL1, RUVBL2, ACTL6A, YEATS4, VPS72, ACTR6 and ZNHIT1. Component of a NuA4-related complex which contains EP400, TRRAP/PAF400, SRCAP, BRD8/SMAP, EPC1, DMAP1/DNMAP1, RUVBL1/TIP49, RUVBL2, actin, ACTL6A/BAF53A, VPS72 and YEATS4/GAS41. As to quaternary structure, (Microbial infection) Interacts with hepatitis C virus (HCV) NS5A. In terms of assembly, (Microbial infection) Interacts with human adenovirus 2 DBP.

Its subcellular location is the nucleus. Catalytic component of the SRCAP complex which mediates the ATP-dependent exchange of histone H2AZ/H2B dimers for nucleosomal H2A/H2B, leading to transcriptional regulation of selected genes by chromatin remodeling. Acts as a coactivator for CREB-mediated transcription, steroid receptor-mediated transcription, and Notch-mediated transcription. This Homo sapiens (Human) protein is Helicase SRCAP (SRCAP).